A 276-amino-acid polypeptide reads, in one-letter code: 1-(5-phosphoribosyl)-5-[(5-phosphoribosylamino)methylideneamino] imidazole-4-carboxamide isomerase (276 aa).

This sequence belongs to the HisA/HisF family.

Its subcellular location is the cytoplasm. The catalysed reaction is 1-(5-phospho-beta-D-ribosyl)-5-[(5-phospho-beta-D-ribosylamino)methylideneamino]imidazole-4-carboxamide = 5-[(5-phospho-1-deoxy-D-ribulos-1-ylimino)methylamino]-1-(5-phospho-beta-D-ribosyl)imidazole-4-carboxamide. The protein operates within amino-acid biosynthesis; L-histidine biosynthesis; L-histidine from 5-phospho-alpha-D-ribose 1-diphosphate: step 4/9. In Debaryomyces hansenii (strain ATCC 36239 / CBS 767 / BCRC 21394 / JCM 1990 / NBRC 0083 / IGC 2968) (Yeast), this protein is 1-(5-phosphoribosyl)-5-[(5-phosphoribosylamino)methylideneamino] imidazole-4-carboxamide isomerase (HIS6).